The following is a 224-amino-acid chain: MNTDLALLRLLQLASPGLPVGGFTYSQGLEWAVEAGWVRSVAGFAAWQREQLHDTLGYLDWPVLARLYRACQADDAEVFAYWSRFLLANRETSELRLEETQRGSALARLLDGWQLGQDPAWRNGLELSQLGGMAWLGAHWAIPLRDLALGHGFAWLEGAVMAGVKLVPFGQQAAQTLLRDLGEELPAVLDHALVLDDEQLGGGLPLLAIASSRHETQYTRLFRS.

It belongs to the UreF family. As to quaternary structure, ureD, UreF and UreG form a complex that acts as a GTP-hydrolysis-dependent molecular chaperone, activating the urease apoprotein by helping to assemble the nickel containing metallocenter of UreC. The UreE protein probably delivers the nickel.

The protein localises to the cytoplasm. In terms of biological role, required for maturation of urease via the functional incorporation of the urease nickel metallocenter. The sequence is that of Urease accessory protein UreF from Pseudomonas entomophila (strain L48).